The sequence spans 372 residues: Actin-related protein 2/3 complex subunit 1B (372 aa).

WD repeat units lie at residues 6–45 (FLVE…WTKV), 50–89 (EHNG…WKPT), 94–135 (RINR…WVCK), 140–179 (PIRS…VEER), 242–280 (SETL…GMLS), and 324–367 (LHKN…SALK).

Belongs to the WD repeat ARPC1 family. In terms of assembly, component of the Arp2/3 complex composed of ACTR2/ARP2, ACTR3/ARP3, ARPC1B/p41-ARC, ARPC2/p34-ARC, ARPC3/p21-ARC, ARPC4/p20-ARC and ARPC5/p16-ARC.

The protein resides in the cytoplasm. Its subcellular location is the cytoskeleton. It localises to the nucleus. Functionally, component of the Arp2/3 complex, a multiprotein complex that mediates actin polymerization upon stimulation by nucleation-promoting factor (NPF). The Arp2/3 complex mediates the formation of branched actin networks in the cytoplasm, providing the force for cell motility. In addition to its role in the cytoplasmic cytoskeleton, the Arp2/3 complex also promotes actin polymerization in the nucleus, thereby regulating gene transcription and repair of damaged DNA. The Arp2/3 complex promotes homologous recombination (HR) repair in response to DNA damage by promoting nuclear actin polymerization, leading to drive motility of double-strand breaks (DSBs). This is Actin-related protein 2/3 complex subunit 1B from Homo sapiens (Human).